The chain runs to 132 residues: uncharacterized protein (132 aa).

To M.jannaschii MJ0661.

This is an uncharacterized protein from Helicobacter pylori (strain J99 / ATCC 700824) (Campylobacter pylori J99).